The primary structure comprises 199 residues: Thymidine kinase (199 aa).

Residues 15–22 (GSMFSGKS) and 88–91 (DEVQ) each bind ATP. Residue glutamate 89 is the Proton acceptor of the active site. Residues cysteine 145, cysteine 148, cysteine 183, and histidine 186 each coordinate Zn(2+).

It belongs to the thymidine kinase family. Homotetramer.

It is found in the cytoplasm. The enzyme catalyses thymidine + ATP = dTMP + ADP + H(+). The polypeptide is Thymidine kinase (Staphylococcus epidermidis (strain ATCC 12228 / FDA PCI 1200)).